The following is a 212-amino-acid chain: Fibrillarin-like rRNA/tRNA 2'-O-methyltransferase (212 aa).

Residues 1-37 (MSEPNLPAGVERREIGGETRLATRGPPVYGEPTADGW) form a disordered region. Residues 74 to 75 (TT), 90 to 91 (EF), 115 to 116 (DA), and 136 to 139 (DVAT) contribute to the S-adenosyl-L-methionine site.

The protein belongs to the methyltransferase superfamily. Fibrillarin family. As to quaternary structure, interacts with nop5. Component of box C/D small ribonucleoprotein (sRNP) particles that contain rpl7ae, FlpA and nop5, plus a guide RNA.

In terms of biological role, involved in pre-rRNA and tRNA processing. Utilizes the methyl donor S-adenosyl-L-methionine to catalyze the site-specific 2'-hydroxyl methylation of ribose moieties in rRNA and tRNA. Site specificity is provided by a guide RNA that base pairs with the substrate. Methylation occurs at a characteristic distance from the sequence involved in base pairing with the guide RNA. The chain is Fibrillarin-like rRNA/tRNA 2'-O-methyltransferase from Halorubrum lacusprofundi (strain ATCC 49239 / DSM 5036 / JCM 8891 / ACAM 34).